The primary structure comprises 154 residues: Keratin-associated protein 9-4 (154 aa).

Tandem repeats lie at residues 8–12 (CCQPT), 13–17 (CCRTT), 18–22 (CCRTT), 37–41 (CCQPS), 42–46 (CCVSS), 51–55 (CCRPT), 56–60 (CCQNT), 61–65 (CCQPT), 70–74 (CCQPS), 75–79 (CCSTP), 80–84 (CCQPT), 85–89 (CCGSS), 129–133 (CCRPA), 134–138 (CCETT), and 148–152 (CCQPF). A 15 X 5 AA repeats of C-C-[RQVGE]-[SPTN]-[TASPF] region spans residues 8–152 (CCQPTCCRTT…TCVSSCCQPF (145 aa)).

It belongs to the KRTAP type 9 family. In terms of assembly, interacts with hair keratins.

Its function is as follows. In the hair cortex, hair keratin intermediate filaments are embedded in an interfilamentous matrix, consisting of hair keratin-associated proteins (KRTAP), which are essential for the formation of a rigid and resistant hair shaft through their extensive disulfide bond cross-linking with abundant cysteine residues of hair keratins. The matrix proteins include the high-sulfur and high-glycine-tyrosine keratins. This Homo sapiens (Human) protein is Keratin-associated protein 9-4 (KRTAP9-4).